Consider the following 711-residue polypeptide: Ribosomal RNA large subunit methyltransferase K/L (711 aa).

The THUMP domain occupies 43–154; sequence LGYRITLWSR…RGQITIGLNF (112 aa).

It belongs to the methyltransferase superfamily. RlmKL family.

It is found in the cytoplasm. It catalyses the reaction guanosine(2445) in 23S rRNA + S-adenosyl-L-methionine = N(2)-methylguanosine(2445) in 23S rRNA + S-adenosyl-L-homocysteine + H(+). The enzyme catalyses guanosine(2069) in 23S rRNA + S-adenosyl-L-methionine = N(2)-methylguanosine(2069) in 23S rRNA + S-adenosyl-L-homocysteine + H(+). Its function is as follows. Specifically methylates the guanine in position 2445 (m2G2445) and the guanine in position 2069 (m7G2069) of 23S rRNA. The polypeptide is Ribosomal RNA large subunit methyltransferase K/L (Shewanella sediminis (strain HAW-EB3)).